Consider the following 397-residue polypeptide: Succinyl-diaminopimelate desuccinylase (397 aa).

His74 lines the Zn(2+) pocket. Asp76 is a catalytic residue. Asp107 provides a ligand contact to Zn(2+). Glu141 serves as the catalytic Proton acceptor. Zn(2+) contacts are provided by Glu142, Glu170, and His368.

The protein belongs to the peptidase M20A family. DapE subfamily. As to quaternary structure, homodimer. Zn(2+) serves as cofactor. Co(2+) is required as a cofactor.

It carries out the reaction N-succinyl-(2S,6S)-2,6-diaminopimelate + H2O = (2S,6S)-2,6-diaminopimelate + succinate. Its pathway is amino-acid biosynthesis; L-lysine biosynthesis via DAP pathway; LL-2,6-diaminopimelate from (S)-tetrahydrodipicolinate (succinylase route): step 3/3. In terms of biological role, catalyzes the hydrolysis of N-succinyl-L,L-diaminopimelic acid (SDAP), forming succinate and LL-2,6-diaminopimelate (DAP), an intermediate involved in the bacterial biosynthesis of lysine and meso-diaminopimelic acid, an essential component of bacterial cell walls. This is Succinyl-diaminopimelate desuccinylase from Mesorhizobium japonicum (strain LMG 29417 / CECT 9101 / MAFF 303099) (Mesorhizobium loti (strain MAFF 303099)).